The chain runs to 638 residues: Phosphomethylpyrimidine synthase (638 aa).

Substrate is bound by residues asparagine 233, methionine 262, tyrosine 291, histidine 327, 347–349, 388–391, and glutamate 427; these read SRG and DGLR. Position 431 (histidine 431) interacts with Zn(2+). Tyrosine 454 is a binding site for substrate. Histidine 495 is a Zn(2+) binding site. Positions 575, 578, and 583 each coordinate [4Fe-4S] cluster.

Belongs to the ThiC family. Homodimer. Requires [4Fe-4S] cluster as cofactor.

It catalyses the reaction 5-amino-1-(5-phospho-beta-D-ribosyl)imidazole + S-adenosyl-L-methionine = 4-amino-2-methyl-5-(phosphooxymethyl)pyrimidine + CO + 5'-deoxyadenosine + formate + L-methionine + 3 H(+). It functions in the pathway cofactor biosynthesis; thiamine diphosphate biosynthesis. In terms of biological role, catalyzes the synthesis of the hydroxymethylpyrimidine phosphate (HMP-P) moiety of thiamine from aminoimidazole ribotide (AIR) in a radical S-adenosyl-L-methionine (SAM)-dependent reaction. This Saccharophagus degradans (strain 2-40 / ATCC 43961 / DSM 17024) protein is Phosphomethylpyrimidine synthase.